Here is a 245-residue protein sequence, read N- to C-terminus: Tetraspanin-6 (245 aa).

The Cytoplasmic portion of the chain corresponds to 1–19 (MASPSRRLQTKPVITCFKS). The chain crosses the membrane as a helical span at residues 20–40 (VLLIYTFIFWITGVILLAVGI). The Extracellular portion of the chain corresponds to 41–59 (WGKVSLENYFSLLNEKATN). Residues 60 to 80 (VPFVLIATGTVIILLGTFGCF) form a helical membrane-spanning segment. The Cytoplasmic segment spans residues 81-93 (ATCRASAWMLKLY). A helical transmembrane segment spans residues 94–114 (AMFLTLIFLVELVAAIVGFVF). At 115 to 208 (RHEIKNSFKN…IKVMTIIESE (94 aa)) the chain is on the extracellular side. N-linked (GlcNAc...) asparagine glycosylation occurs at Asn134. A helical membrane pass occupies residues 209–229 (MGVVAGISFGVACFQLIGIFL). The Cytoplasmic segment spans residues 230 to 245 (AYCLSRAITNNQYEIV).

It belongs to the tetraspanin (TM4SF) family.

The protein localises to the membrane. This Pongo abelii (Sumatran orangutan) protein is Tetraspanin-6 (TSPAN6).